We begin with the raw amino-acid sequence, 271 residues long: 3-methyl-2-oxobutanoate hydroxymethyltransferase (271 aa).

Mg(2+) is bound by residues Asp53 and Asp92. 3-methyl-2-oxobutanoate-binding positions include 53 to 54 (DS), Asp92, and Lys120. A Mg(2+)-binding site is contributed by Glu122. The active-site Proton acceptor is Glu189.

This sequence belongs to the PanB family. Homodecamer; pentamer of dimers. Requires Mg(2+) as cofactor.

The protein resides in the cytoplasm. It carries out the reaction 3-methyl-2-oxobutanoate + (6R)-5,10-methylene-5,6,7,8-tetrahydrofolate + H2O = 2-dehydropantoate + (6S)-5,6,7,8-tetrahydrofolate. It functions in the pathway cofactor biosynthesis; (R)-pantothenate biosynthesis; (R)-pantoate from 3-methyl-2-oxobutanoate: step 1/2. Its function is as follows. Catalyzes the reversible reaction in which hydroxymethyl group from 5,10-methylenetetrahydrofolate is transferred onto alpha-ketoisovalerate to form ketopantoate. The polypeptide is 3-methyl-2-oxobutanoate hydroxymethyltransferase (Paraburkholderia xenovorans (strain LB400)).